Reading from the N-terminus, the 34-residue chain is Mu-conotoxin GS (34 aa).

3 disulfide bridges follow: Cys-2-Cys-14, Cys-9-Cys-19, and Cys-13-Cys-27. 4-hydroxyproline is present on residues Pro-10 and Pro-11. At Glu-32 the chain carries 4-carboxyglutamate.

In terms of tissue distribution, expressed by the venom duct.

It is found in the secreted. Its function is as follows. Mu-conotoxins block voltage-gated sodium channels (Nav). No effect was observed upon injections into mice and goldfish (25 ug). The sequence is that of Mu-conotoxin GS from Conus geographus (Geography cone).